The primary structure comprises 294 residues: Probable endonuclease 4 (294 aa).

Residues His78, His118, Glu155, Asp189, His192, His226, Asp239, His241, and Glu271 each coordinate Zn(2+).

It belongs to the AP endonuclease 2 family. Zn(2+) is required as a cofactor.

The catalysed reaction is Endonucleolytic cleavage to 5'-phosphooligonucleotide end-products.. Endonuclease IV plays a role in DNA repair. It cleaves phosphodiester bonds at apurinic or apyrimidinic (AP) sites, generating a 3'-hydroxyl group and a 5'-terminal sugar phosphate. The polypeptide is Probable endonuclease 4 (Oleidesulfovibrio alaskensis (strain ATCC BAA-1058 / DSM 17464 / G20) (Desulfovibrio alaskensis)).